Reading from the N-terminus, the 202-residue chain is NADH:(hydroxy)cinnamate reductase subunit CrdA (202 aa).

Belongs to the NADH-dependent flavin reductase family. As to quaternary structure, NADH:(hydroxy)cinnamate reductase Crd is a heterodimer composed of CrdA and CrdB subunits, encoded by adjacent genes. Requires FMN as cofactor.

Functionally, component of the NADH:(hydroxy)cinnamate reductase. CrdA is probably reduced by NADH and then transfers the electrons to the catalytic center of CrdB. Is likely involved in protecting V.ruber from (hydroxy)cinnamate poisoning. This Vibrio ruber (strain DSM 16370 / JCM 11486 / BCRC 17186 / CECT 7878 / LMG 23124 / VR1) protein is NADH:(hydroxy)cinnamate reductase subunit CrdA.